A 319-amino-acid polypeptide reads, in one-letter code: Nucleotide-binding protein Rru_A3448 (319 aa).

The interval 1–34 (MGRSASLLRLRDPAPLPTDIAPDPAEAPPSPAAD) is disordered. Position 42–49 (42–49 (GMSGAGRT)) interacts with ATP. Residue 90-93 (DTRT) participates in GTP binding.

It belongs to the RapZ-like family.

In terms of biological role, displays ATPase and GTPase activities. This Rhodospirillum rubrum (strain ATCC 11170 / ATH 1.1.1 / DSM 467 / LMG 4362 / NCIMB 8255 / S1) protein is Nucleotide-binding protein Rru_A3448.